Reading from the N-terminus, the 329-residue chain is UDP-N-acetylenolpyruvoylglucosamine reductase (329 aa).

In terms of domain architecture, FAD-binding PCMH-type spans 28–192; it reads RVGGPADLLC…ARVEVRLHPG (165 aa). Arg-172 is a catalytic residue. Catalysis depends on Ser-221, which acts as the Proton donor. The active site involves Glu-291. Positions 307-329 are disordered; it reads DGHAAAGGGPGAASGGVRPPEAT. Residues 311 to 320 show a composition bias toward gly residues; the sequence is AAGGGPGAAS.

This sequence belongs to the MurB family. FAD is required as a cofactor.

It localises to the cytoplasm. The catalysed reaction is UDP-N-acetyl-alpha-D-muramate + NADP(+) = UDP-N-acetyl-3-O-(1-carboxyvinyl)-alpha-D-glucosamine + NADPH + H(+). Its pathway is cell wall biogenesis; peptidoglycan biosynthesis. In terms of biological role, cell wall formation. The sequence is that of UDP-N-acetylenolpyruvoylglucosamine reductase from Anaeromyxobacter dehalogenans (strain 2CP-1 / ATCC BAA-258).